Consider the following 1035-residue polypeptide: Beta-galactosidase (1035 aa).

Substrate is bound by residues Asn109 and Asp208. Residue Asp208 participates in Na(+) binding. Residues Glu424, His426, and Glu469 each coordinate Mg(2+). Substrate-binding positions include Glu469 and 545–548 (EYAH). Glu469 serves as the catalytic Proton donor. Residue Glu545 is the Nucleophile of the active site. A Mg(2+)-binding site is contributed by Asn605. Phe609 and Asn612 together coordinate Na(+). The substrate site is built by Asn612 and Trp1011.

This sequence belongs to the glycosyl hydrolase 2 family. Homotetramer. The cofactor is Mg(2+). Na(+) is required as a cofactor.

It catalyses the reaction Hydrolysis of terminal non-reducing beta-D-galactose residues in beta-D-galactosides.. The protein is Beta-galactosidase of Klebsiella pneumoniae (strain 342).